The primary structure comprises 307 residues: Follistatin-related protein 1 (307 aa).

The signal sequence occupies residues 1–19; that stretch reads MMWRRWLALALVAVAWVHA. Positions 29-52 constitute a Follistatin-like domain; sequence ICANVFCGAGRECAVTEKGEPTCL. 5 disulfides stabilise this stretch: Cys-30–Cys-41, Cys-35–Cys-51, Cys-53–Cys-83, Cys-57–Cys-76, and Cys-65–Cys-97. A Kazal-like domain is found at 47 to 99; the sequence is GEPTCLCIEQCKPHKRPVCGSNGKTYLNHCELHRDACLTGSKIQVDYDGHCKE. Residue Asn-143 is glycosylated (N-linked (GlcNAc...) asparagine). The region spanning 143–177 is the EF-hand 1 domain; it reads NYSEILDKYFKNFDNGDSRLDSSEFLKFVEQNETA. Phosphoserine is present on Ser-164. Asn-174 and Asn-179 each carry an N-linked (GlcNAc...) asparagine glycan. Residues 192-227 form the EF-hand 2 domain; sequence LRGLCVDALIELSDENADWKLSFQEFLKCLNPSFNP. Residues 232–286 form the VWFC domain; the sequence is CALEDETYADGAETEVDCNRCVCACGNWVCTAMTCDGKNQKGAQTQAEEEMTRYV.

As to quaternary structure, homodimer. Interacts with SCN10A. Interacts with DIP2A; DIP2A may act as a cell surface receptor for FSTL1. Interacts with BMP4. Interacts with CD14; this interaction promotes TL4-mediated signaling cascade.

The protein resides in the secreted. In terms of biological role, secreted glycoprotein that is involved in various physiological processes, such as angiogenesis, regulation of the immune response, cell proliferation and differentiation. Plays a role in the development of the central nervous system, skeletal system, lungs, and ureter. Promotes endothelial cell survival, migration and differentiation into network structures in an AKT-dependent manner. Also promotes survival of cardiac myocytes. Initiates various signaling cascades by activating different receptors on the cell surface such as DIP2A, TLR4 or BMP receptors. In Bos taurus (Bovine), this protein is Follistatin-related protein 1 (FSTL1).